Reading from the N-terminus, the 726-residue chain is Prolyl endopeptidase-like (726 aa).

A Phosphoserine modification is found at S138. Active-site charge relay system residues include S558, D644, and H689.

Belongs to the peptidase S9A family. Homodimer. Interacts with the AP-1 complex.

It localises to the cytoplasm. The protein resides in the cytosol. The protein localises to the golgi apparatus. Its subcellular location is the trans-Golgi network. It is found in the cytoskeleton. It localises to the nucleus. In terms of biological role, serine peptidase whose precise substrate specificity remains unclear. Does not cleave peptides after a arginine or lysine residue. Regulates trans-Golgi network morphology and sorting by regulating the membrane binding of the AP-1 complex. May play a role in the regulation of synaptic vesicle exocytosis. The protein is Prolyl endopeptidase-like (Prepl) of Rattus norvegicus (Rat).